A 286-amino-acid polypeptide reads, in one-letter code: Aldo-keto reductase MAP_4149 (286 aa).

Catalysis depends on Y61, which acts as the Proton donor. Residues L201, V203, V239, R241, S242, R247, and N251 each contribute to the NADPH site.

It belongs to the aldo/keto reductase family.

This chain is Aldo-keto reductase MAP_4149, found in Mycolicibacterium paratuberculosis (strain ATCC BAA-968 / K-10) (Mycobacterium paratuberculosis).